The following is a 436-amino-acid chain: Protein arginine methyltransferase NDUFAF7, mitochondrial (436 aa).

The N-terminal 41 residues, methionine 1–histidine 41, are a transit peptide targeting the mitochondrion. Residues glycine 411–glutamine 436 are disordered. The span at glutamine 413–valine 427 shows a compositional bias: polar residues.

The protein belongs to the NDUFAF7 family. As to quaternary structure, interacts with NDUFS2.

Its subcellular location is the mitochondrion. The catalysed reaction is L-arginyl-[protein] + 2 S-adenosyl-L-methionine = N(omega),N(omega)'-dimethyl-L-arginyl-[protein] + 2 S-adenosyl-L-homocysteine + 2 H(+). Functionally, arginine methyltransferase involved in the assembly or stability of mitochondrial NADH:ubiquinone oxidoreductase complex (complex I). Acts by mediating symmetric dimethylation of 'Arg-118' of NDUFS2 after it assembles into the complex I, stabilizing the early intermediate complex. This chain is Protein arginine methyltransferase NDUFAF7, mitochondrial, found in Mus musculus (Mouse).